The chain runs to 58 residues: Large ribosomal subunit protein bL32 (58 aa).

The span at 1–19 (MAVPKRKTSKSNTKMRRAA) shows a compositional bias: basic residues. Positions 1–22 (MAVPKRKTSKSNTKMRRAANSK) are disordered.

This sequence belongs to the bacterial ribosomal protein bL32 family.

This Clostridioides difficile (strain 630) (Peptoclostridium difficile) protein is Large ribosomal subunit protein bL32.